We begin with the raw amino-acid sequence, 168 residues long: Sperm acrosome-associated protein 9 (168 aa).

In terms of assembly, microtubule inner protein component of sperm flagellar doublet microtubules. Interacts with CABP1 and CALR. Interacts with INCA1. Interacts with microtubules. As to expression, testis-specific. Expressed in round spermatids.

The protein localises to the cytoplasm. It localises to the cytoplasmic vesicle. Its subcellular location is the secretory vesicle. The protein resides in the acrosome. It is found in the cytoskeleton. The protein localises to the cilium basal body. It localises to the flagellum axoneme. Its subcellular location is the cilium axoneme. The protein resides in the nucleus. Functionally, microtubule inner protein (MIP) part of the dynein-decorated doublet microtubules (DMTs) of multiciliated respiratory cells and the distal singlet microtubules of monoflagellated spermatozoa. Forms an extensive interaction network cross-linking the lumen of axonemal doublet microtubules. The polypeptide is Sperm acrosome-associated protein 9 (Spaca9) (Rattus norvegicus (Rat)).